We begin with the raw amino-acid sequence, 373 residues long: GDP-mannose 4,6-dehydratase (373 aa).

NADP(+) is bound by residues 10 to 15 (GITGQD), 65 to 66 (DL), 87 to 91 (LGAQS), and Tyr-102. Thr-134 is an active-site residue. Residues Glu-136 and Tyr-158 each act as nucleophile in the active site. Residues Lys-162, His-188, and Arg-193 each contribute to the NADP(+) site.

It belongs to the NAD(P)-dependent epimerase/dehydratase family. GDP-mannose 4,6-dehydratase subfamily. Requires NADP(+) as cofactor.

It carries out the reaction GDP-alpha-D-mannose = GDP-4-dehydro-alpha-D-rhamnose + H2O. In terms of biological role, catalyzes the conversion of GDP-D-mannose to GDP-4-dehydro-6-deoxy-D-mannose. The chain is GDP-mannose 4,6-dehydratase from Vibrio cholerae serotype O1 (strain ATCC 39315 / El Tor Inaba N16961).